The primary structure comprises 194 residues: Large ribosomal subunit protein eL15 (194 aa).

The interval Leu-162–Lys-194 is disordered. Basic residues predominate over residues Arg-167–Gly-176.

Belongs to the eukaryotic ribosomal protein eL15 family.

The polypeptide is Large ribosomal subunit protein eL15 (Thermococcus onnurineus (strain NA1)).